The chain runs to 319 residues: MTNSSFFCPVYKDLEPFTYFFYLVFLVGIIGSCFATWAFIQKNTNHRCVSIYLINLLTADFLLTLALPVKIVVDLGVAPWKLKIFHCQVTACLIYINMYLSIIFLAFVSIDRCLQLTHSCKIYRIQEPGFAKMISTVVWLMVLLIMVPNMMIPIKDIKEKSNVGCMEFKKEFGRNWHLLTNFICVAIFLNFSAIILISNCLVIRQLYRNKDNENYPNVKKALINILLVTTGYIICFVPYHIVRIPYTLSQTEVITDCSTRISLFKAKEATLLLAVSNLCFDPILYYHLSKAFRSKVTETFASPKETKAQKEKLRCENNA.

Residues 1 to 21 (MTNSSFFCPVYKDLEPFTYFF) lie on the Extracellular side of the membrane. A glycan (N-linked (GlcNAc...) asparagine) is linked at asparagine 3. Residues 22-42 (YLVFLVGIIGSCFATWAFIQK) traverse the membrane as a helical segment. The Cytoplasmic portion of the chain corresponds to 43–48 (NTNHRC). Residues 49–69 (VSIYLINLLTADFLLTLALPV) form a helical membrane-spanning segment. Topologically, residues 70 to 89 (KIVVDLGVAPWKLKIFHCQV) are extracellular. Residues 90 to 110 (TACLIYINMYLSIIFLAFVSI) traverse the membrane as a helical segment. Residues 111 to 132 (DRCLQLTHSCKIYRIQEPGFAK) lie on the Cytoplasmic side of the membrane. The helical transmembrane segment at 133-153 (MISTVVWLMVLLIMVPNMMIP) threads the bilayer. The Extracellular segment spans residues 154–181 (IKDIKEKSNVGCMEFKKEFGRNWHLLTN). The helical transmembrane segment at 182–202 (FICVAIFLNFSAIILISNCLV) threads the bilayer. Residues 203–224 (IRQLYRNKDNENYPNVKKALIN) lie on the Cytoplasmic side of the membrane. The chain crosses the membrane as a helical span at residues 225–245 (ILLVTTGYIICFVPYHIVRIP). Residues 246–268 (YTLSQTEVITDCSTRISLFKAKE) are Extracellular-facing. A helical transmembrane segment spans residues 269-289 (ATLLLAVSNLCFDPILYYHLS). Residues 290-319 (KAFRSKVTETFASPKETKAQKEKLRCENNA) are Cytoplasmic-facing.

Belongs to the G-protein coupled receptor 1 family. As to expression, expressed in both T-cell subsets and natural killer cells, while it is undetectable in B cells or CD14(+) monocytes. Expressed in peripheral blood mononuclear cells (PBMC) and Jurkat cells (at protein level).

The protein localises to the cell membrane. In terms of biological role, G-protein coupled receptor for Big LEN, a 16-amino acid neuropeptide produced from the precursor protein, proSAAS (encoded by PCSK1N). Acts through a G(i)-alpha-mediated pathway in response to Big LEN. Big LEN-GPR171 system plays an important role in regulating feeding and metabolism. Also plays a role in modulating fear and anxiety-like behaviors in the basolateral amygdala. Big LEN-GPR171 modulates the mu-type opioid receptor signaling and antinociception. Acts as a negative regulator T cell function. The chain is G-protein coupled receptor 171 from Homo sapiens (Human).